Here is a 165-residue protein sequence, read N- to C-terminus: Small ribosomal subunit protein uS17m (165 aa).

The protein belongs to the universal ribosomal protein uS17 family. As to quaternary structure, component of the mitochondrial small ribosomal subunit (mt-SSU). Mature N.crassa 74S mitochondrial ribosomes consist of a small (37S) and a large (54S) subunit. The 37S small subunit contains a 16S ribosomal RNA (16S mt-rRNA) and 32 different proteins. The 54S large subunit contains a 23S rRNA (23S mt-rRNA) and 42 different proteins. uS17m interacts with the F(1)-ATPase inhibitor IF(1) dimer.

The protein localises to the mitochondrion. Functionally, component of the mitochondrial ribosome (mitoribosome), a dedicated translation machinery responsible for the synthesis of mitochondrial genome-encoded proteins, including at least some of the essential transmembrane subunits of the mitochondrial respiratory chain. The mitoribosomes are attached to the mitochondrial inner membrane and translation products are cotranslationally integrated into the membrane. This Neurospora crassa (strain ATCC 24698 / 74-OR23-1A / CBS 708.71 / DSM 1257 / FGSC 987) protein is Small ribosomal subunit protein uS17m (mrps17).